Reading from the N-terminus, the 320-residue chain is GMP reductase (320 aa).

C174 (thioimidate intermediate) is an active-site residue. 203–226 (IIADGGLRVNGDIAKSIRFGATMC) serves as a coordination point for NADP(+).

This sequence belongs to the IMPDH/GMPR family. GuaC type 2 subfamily.

It catalyses the reaction IMP + NH4(+) + NADP(+) = GMP + NADPH + 2 H(+). Its function is as follows. Catalyzes the irreversible NADPH-dependent deamination of GMP to IMP. It functions in the conversion of nucleobase, nucleoside and nucleotide derivatives of G to A nucleotides, and in maintaining the intracellular balance of A and G nucleotides. The polypeptide is GMP reductase (Mesoplasma florum (strain ATCC 33453 / NBRC 100688 / NCTC 11704 / L1) (Acholeplasma florum)).